A 518-amino-acid chain; its full sequence is Gypsy retrotransposon integrase-like protein 1 (518 aa).

The Integrase catalytic domain occupies 130–292; that stretch reads QQHLPMVGNP…TPYFQMFNRN (163 aa). Position 498 is a phosphoserine (serine 498).

The polypeptide is Gypsy retrotransposon integrase-like protein 1 (Gin1) (Mus musculus (Mouse)).